The following is a 180-amino-acid chain: MGNFHATTIFAVHHNGECAMAGDGQVTMGNAVVMKHTARKVRKLFQGKVLAGFAGSVADAFTLFEMFEGKLEEYNGNLQRAAVEMAKQWRGDKMLRQLEAMLIVMDKTTMLLVSGTGEVIEPDDGILAIGSGGNYALSAGRALKQYASEHLTAKQIAKASLEIAGDICVYTNHNIIVEEL.

Residue Thr7 is part of the active site. The Na(+) site is built by Gly165, Cys168, and Thr171.

This sequence belongs to the peptidase T1B family. HslV subfamily. In terms of assembly, a double ring-shaped homohexamer of HslV is capped on each side by a ring-shaped HslU homohexamer. The assembly of the HslU/HslV complex is dependent on binding of ATP.

The protein localises to the cytoplasm. It catalyses the reaction ATP-dependent cleavage of peptide bonds with broad specificity.. Allosterically activated by HslU binding. Functionally, protease subunit of a proteasome-like degradation complex believed to be a general protein degrading machinery. In Bacillus anthracis (strain A0248), this protein is ATP-dependent protease subunit HslV.